Consider the following 396-residue polypeptide: 1-deoxy-D-xylulose 5-phosphate reductoisomerase (396 aa).

Residues Thr13, Gly14, Ser15, Ile16, and Asn127 each coordinate NADPH. Position 128 (Lys128) interacts with 1-deoxy-D-xylulose 5-phosphate. An NADPH-binding site is contributed by Glu129. Asp153 contacts Mn(2+). Ser154, Glu155, Ser184, and His207 together coordinate 1-deoxy-D-xylulose 5-phosphate. Glu155 contributes to the Mn(2+) binding site. Gly213 contacts NADPH. The 1-deoxy-D-xylulose 5-phosphate site is built by Ser220, Asn225, Lys226, and Glu229. Glu229 provides a ligand contact to Mn(2+).

This sequence belongs to the DXR family. Mg(2+) is required as a cofactor. Requires Mn(2+) as cofactor.

The enzyme catalyses 2-C-methyl-D-erythritol 4-phosphate + NADP(+) = 1-deoxy-D-xylulose 5-phosphate + NADPH + H(+). The protein operates within isoprenoid biosynthesis; isopentenyl diphosphate biosynthesis via DXP pathway; isopentenyl diphosphate from 1-deoxy-D-xylulose 5-phosphate: step 1/6. With respect to regulation, inhibited by fosmidomycin and 3-(N-acetyl-N-hydroxyamino)-propylphosphonic acid (FR-900098). In terms of biological role, catalyzes the NADPH-dependent rearrangement and reduction of 1-deoxy-D-xylulose-5-phosphate (DXP) to 2-C-methyl-D-erythritol 4-phosphate (MEP). The chain is 1-deoxy-D-xylulose 5-phosphate reductoisomerase from Pseudomonas aeruginosa (strain ATCC 15692 / DSM 22644 / CIP 104116 / JCM 14847 / LMG 12228 / 1C / PRS 101 / PAO1).